We begin with the raw amino-acid sequence, 82 residues long: Small ribosomal subunit protein bS16 (82 aa).

Belongs to the bacterial ribosomal protein bS16 family.

The chain is Small ribosomal subunit protein bS16 from Pectobacterium atrosepticum (strain SCRI 1043 / ATCC BAA-672) (Erwinia carotovora subsp. atroseptica).